A 331-amino-acid polypeptide reads, in one-letter code: Centriolar satellite-associated tubulin polyglutamylase complex regulator 1 (331 aa).

The required for interaction with PCM1 stretch occupies residues 1–111 (MLSPERLALP…HCLLQLLCPD (111 aa)). The segment at 1 to 225 (MLSPERLALP…SCPPPALVKE (225 aa)) is required for interaction with TPGS1, LRRC49, and TTLL1. Residues 112–331 (FPLELTQKAA…STEETDESET (220 aa)) form a required for interaction with TPGS2 region. Residues 288-331 (SPEASCLPSRTPPRVGSPWRPLHHSRKVDGESDGSTEETDESET) are disordered. Residues 318-331 (ESDGSTEETDESET) show a composition bias toward acidic residues. Position 319 is a phosphoserine (Ser-319).

It belongs to the CSTPP1 family. Interacts with PCM1. Interacts with TTLL1, TPGS1, TPGS2 and LRRC49; the interactions link CSTPP1 to the complex TPGC. Binds to alpha-tubulin.

The protein localises to the cytoplasm. The protein resides in the cytoskeleton. It localises to the microtubule organizing center. It is found in the centrosome. Its subcellular location is the centriolar satellite. In terms of biological role, regulator of the tubulin polyglutamylase complex (TPGC) that controls cytoskeletal organization, nuclear shape, and cilium disassembly by balancing microtubule and actin assembly. Regulates the assembly and stability of the TPGC and thereby modulates polyglutamylation of the microtubule, which antagonizes MAP4 binding. The sequence is that of Centriolar satellite-associated tubulin polyglutamylase complex regulator 1 from Homo sapiens (Human).